Consider the following 119-residue polypeptide: Holo-[acyl-carrier-protein] synthase (119 aa).

Mg(2+) is bound by residues D8 and E58.

Belongs to the P-Pant transferase superfamily. AcpS family. It depends on Mg(2+) as a cofactor.

Its subcellular location is the cytoplasm. The enzyme catalyses apo-[ACP] + CoA = holo-[ACP] + adenosine 3',5'-bisphosphate + H(+). In terms of biological role, transfers the 4'-phosphopantetheine moiety from coenzyme A to a Ser of acyl-carrier-protein. The sequence is that of Holo-[acyl-carrier-protein] synthase from Bacillus cereus (strain ZK / E33L).